The chain runs to 202 residues: MAVWREPKPLILASQSRVRQALLANAGLSFEAIPAAIDERAIQRSCGLTSGAEIAVRLACEKARYVSLRSPGRYVIGADQTLECDGRLFNKPDGRVGAAEHLRALSGRTHALHAAVAIVRDGRQLFEYVSVARMTMRELSEDTIEAYLNAAGDEVTASVGAYQLENLGVHLFSRVEGDHFSILGLPLLPLLAFLRSQGLLSL.

The Proton acceptor role is filled by D79.

Belongs to the Maf family. A divalent metal cation serves as cofactor.

The protein resides in the cytoplasm. It catalyses the reaction a ribonucleoside 5'-triphosphate + H2O = a ribonucleoside 5'-phosphate + diphosphate + H(+). It carries out the reaction a 2'-deoxyribonucleoside 5'-triphosphate + H2O = a 2'-deoxyribonucleoside 5'-phosphate + diphosphate + H(+). Nucleoside triphosphate pyrophosphatase. May have a dual role in cell division arrest and in preventing the incorporation of modified nucleotides into cellular nucleic acids. This chain is Nucleoside triphosphate pyrophosphatase, found in Nitrobacter hamburgensis (strain DSM 10229 / NCIMB 13809 / X14).